The sequence spans 370 residues: tRNA-specific 2-thiouridylase MnmA (370 aa).

ATP contacts are provided by residues 9–16 (GMSGGVDS) and methionine 35. The segment at 95–97 (NPD) is interaction with target base in tRNA. Cysteine 100 (nucleophile) is an active-site residue. Cysteine 100 and cysteine 196 are joined by a disulfide. Glycine 124 contributes to the ATP binding site. An interaction with tRNA region spans residues 146-148 (KDQ). The active-site Cysteine persulfide intermediate is cysteine 196. The tract at residues 308-309 (RY) is interaction with tRNA.

Belongs to the MnmA/TRMU family.

Its subcellular location is the cytoplasm. The enzyme catalyses S-sulfanyl-L-cysteinyl-[protein] + uridine(34) in tRNA + AH2 + ATP = 2-thiouridine(34) in tRNA + L-cysteinyl-[protein] + A + AMP + diphosphate + H(+). Functionally, catalyzes the 2-thiolation of uridine at the wobble position (U34) of tRNA, leading to the formation of s(2)U34. The chain is tRNA-specific 2-thiouridylase MnmA from Ralstonia pickettii (strain 12J).